A 472-amino-acid chain; its full sequence is Phosphoenolpyruvate carboxylase (472 aa).

Belongs to the PEPCase type 2 family. As to quaternary structure, homotetramer. Mg(2+) is required as a cofactor.

It carries out the reaction oxaloacetate + phosphate = phosphoenolpyruvate + hydrogencarbonate. Functionally, catalyzes the irreversible beta-carboxylation of phosphoenolpyruvate (PEP) to form oxaloacetate (OAA), a four-carbon dicarboxylic acid source for the tricarboxylic acid cycle. This chain is Phosphoenolpyruvate carboxylase, found in Pyrococcus furiosus (strain ATCC 43587 / DSM 3638 / JCM 8422 / Vc1).